The following is a 372-amino-acid chain: Recombinase Flp protein (372 aa).

One can recognise a Tyr recombinase Flp-type domain in the interval 85-367; that stretch reads GGHNAVAEEI…EYVHSYAMGK (283 aa). Tyr-292 serves as the catalytic O-(3'-phospho-DNA)-tyrosine intermediate.

The protein belongs to the 'phage' integrase family.

Functionally, catalyzes the recombination between the large inverted repetitions of the plasmid. The protein is Recombinase Flp protein of Lachancea fermentati (Zygosaccharomyces fermentati).